The primary structure comprises 225 residues: Ribulose-phosphate 3-epimerase (225 aa).

S10 contacts substrate. 3 residues coordinate a divalent metal cation: H35, D37, and H68. D37 acts as the Proton acceptor in catalysis. Residues H68, G144–G147, and D175–G177 each bind substrate. Residue D175 coordinates a divalent metal cation. D175 serves as the catalytic Proton donor.

The protein belongs to the ribulose-phosphate 3-epimerase family. Requires a divalent metal cation as cofactor.

The enzyme catalyses D-ribulose 5-phosphate = D-xylulose 5-phosphate. It functions in the pathway carbohydrate degradation. Its function is as follows. Catalyzes the reversible epimerization of D-ribulose 5-phosphate to D-xylulose 5-phosphate. The protein is Ribulose-phosphate 3-epimerase of Rhodospirillum rubrum.